Here is a 482-residue protein sequence, read N- to C-terminus: MFS-type transporter traF (482 aa).

Residues 1–14 (MTSGTEQATLNTEE) show a composition bias toward polar residues. A disordered region spans residues 1–22 (MTSGTEQATLNTEENGSDSDHL). N-linked (GlcNAc...) asparagine glycosylation is found at asparagine 15 and asparagine 45. 9 helical membrane passes run 52 to 72 (VFITACLASLVCISTFGSSVM), 89 to 109 (LSILATALYVLGFAVGPLLFG), 125 to 145 (VFLFAIFSIPIAVAKNVATIF), 149 to 169 (FLCGTFAAAPLAIAGGGLADL), 176 to 196 (GIAVAGFASATFLGPVLGPLV), 209 to 229 (WTQWLSIIFSLVFLAIYFVFC), 275 to 295 (PILALLTLYMGFIYGFLYLCF), 312 to 332 (IGSLPFLSITVGVLIGVVIII), and 354 to 374 (LVPMMIGSILMPAGIFWFAWT). N-linked (GlcNAc...) asparagine glycosylation is present at asparagine 376. The next 3 helical transmembrane spans lie at 379 to 399 (LPWAPQVVSGVFIGCGILLIF), 427 to 447 (LLGAGFPLFASYMFDNLGVPW), and 448 to 468 (AMSLLGFLCVALVPVPFLFFI).

Belongs to the major facilitator superfamily. CAR1 family.

The protein localises to the membrane. MFS-type transporter; part of the tra gene cluster that produces terrestric acid. The clavatol biosynthesis cluster cla and the terrestric acid cluster tra are both involved in the production of peniphenones and penilactones. The polypeptide is MFS-type transporter traF (Penicillium crustosum (Blue mold fungus)).